Here is a 394-residue protein sequence, read N- to C-terminus: Isopentenyl-diphosphate delta-isomerase (394 aa).

Substrate is bound at residue 10-11 (RK). FMN is bound by residues Thr-67, 68–70 (GMT), Ser-101, and Asn-129. 101 to 103 (SQR) is a substrate binding site. Gln-168 lines the substrate pocket. Position 169 (Glu-169) interacts with Mg(2+). FMN is bound by residues Lys-200, Ser-225, Thr-230, 279–281 (GMR), and 300–301 (AL).

The protein belongs to the IPP isomerase type 2 family. Homooctamer. Dimer of tetramers. It depends on FMN as a cofactor. Requires NADPH as cofactor. The cofactor is Mg(2+).

It is found in the cytoplasm. The enzyme catalyses isopentenyl diphosphate = dimethylallyl diphosphate. Involved in the biosynthesis of isoprenoids. Catalyzes the 1,3-allylic rearrangement of the homoallylic substrate isopentenyl (IPP) to its allylic isomer, dimethylallyl diphosphate (DMAPP). The polypeptide is Isopentenyl-diphosphate delta-isomerase (Pyrococcus furiosus (strain ATCC 43587 / DSM 3638 / JCM 8422 / Vc1)).